We begin with the raw amino-acid sequence, 403 residues long: Beta-galactoside alpha-2,6-sialyltransferase 1 (403 aa).

Residues 1 to 9 lie on the Cytoplasmic side of the membrane; sequence MIHTNLKRK. A helical; Signal-anchor for type II membrane protein transmembrane segment spans residues 10–26; that stretch reads FSCFVLVFLLFAIICVW. Residues 27 to 403 lie on the Lumenal side of the membrane; sequence KKGSDYEALT…TLSGFRNNRC (377 aa). 3 disulfide bridges follow: C139–C403, C181–C332, and C350–C361. 2 N-linked (GlcNAc...) asparagine glycosylation sites follow: N146 and N158. Residues S186, N209, N230, 319-321, C350, Y351, T362, Y366, H367, and K373 contribute to the substrate site; that span reads SSG. Phosphotyrosine is present on Y366.

This sequence belongs to the glycosyltransferase 29 family. In terms of assembly, monomer and homodimer. N-glycosylated.

It localises to the golgi apparatus. Its subcellular location is the golgi stack membrane. It is found in the secreted. It catalyses the reaction a beta-D-galactoside + CMP-N-acetyl-beta-neuraminate = an N-acetyl-alpha-neuraminyl-(2-&gt;6)-beta-D-galactosyl derivative + CMP + H(+). It participates in protein modification; protein glycosylation. Its function is as follows. Transfers sialic acid from CMP-sialic acid to galactose-containing acceptor substrates. This chain is Beta-galactoside alpha-2,6-sialyltransferase 1 (St6gal1), found in Mus musculus (Mouse).